We begin with the raw amino-acid sequence, 194 residues long: ATP-dependent Clp protease proteolytic subunit (194 aa).

Serine 98 (nucleophile) is an active-site residue. Histidine 123 is a catalytic residue.

It belongs to the peptidase S14 family. As to quaternary structure, fourteen ClpP subunits assemble into 2 heptameric rings which stack back to back to give a disk-like structure with a central cavity, resembling the structure of eukaryotic proteasomes.

It is found in the cytoplasm. The enzyme catalyses Hydrolysis of proteins to small peptides in the presence of ATP and magnesium. alpha-casein is the usual test substrate. In the absence of ATP, only oligopeptides shorter than five residues are hydrolyzed (such as succinyl-Leu-Tyr-|-NHMec, and Leu-Tyr-Leu-|-Tyr-Trp, in which cleavage of the -Tyr-|-Leu- and -Tyr-|-Trp bonds also occurs).. Functionally, cleaves peptides in various proteins in a process that requires ATP hydrolysis. Has a chymotrypsin-like activity. Plays a major role in the degradation of misfolded proteins. The sequence is that of ATP-dependent Clp protease proteolytic subunit from Staphylococcus carnosus (strain TM300).